The following is a 365-amino-acid chain: Serine/threonine-protein phosphatase 2A activator 1 (365 aa).

The interval 321 to 349 (YEAPSETSEKPAAGTAHTTTTTMPPPRMT) is disordered. The span at 331 to 342 (PAAGTAHTTTTT) shows a compositional bias: low complexity.

It belongs to the PTPA-type PPIase family.

The protein resides in the cytoplasm. It is found in the nucleus. The catalysed reaction is [protein]-peptidylproline (omega=180) = [protein]-peptidylproline (omega=0). Its function is as follows. PPIases accelerate the folding of proteins. It catalyzes the cis-trans isomerization of proline imidic peptide bonds in oligopeptides. Acts as a regulatory subunit for PP2A-like phosphatases modulating their activity or substrate specificity, probably by inducing a conformational change in the catalytic subunit, a direct target of the PPIase. Can reactivate inactive phosphatase PP2A-phosphatase methylesterase complexes (PP2Ai) in presence of ATP and Mg(2+) by dissociating the inactive form from the complex. This chain is Serine/threonine-protein phosphatase 2A activator 1 (RRD1), found in Eremothecium gossypii (strain ATCC 10895 / CBS 109.51 / FGSC 9923 / NRRL Y-1056) (Yeast).